Reading from the N-terminus, the 446-residue chain is Na(+)-translocating NADH-quinone reductase subunit A (446 aa).

This sequence belongs to the NqrA family. In terms of assembly, composed of six subunits; NqrA, NqrB, NqrC, NqrD, NqrE and NqrF.

The enzyme catalyses a ubiquinone + n Na(+)(in) + NADH + H(+) = a ubiquinol + n Na(+)(out) + NAD(+). In terms of biological role, NQR complex catalyzes the reduction of ubiquinone-1 to ubiquinol by two successive reactions, coupled with the transport of Na(+) ions from the cytoplasm to the periplasm. NqrA to NqrE are probably involved in the second step, the conversion of ubisemiquinone to ubiquinol. This chain is Na(+)-translocating NADH-quinone reductase subunit A, found in Aliivibrio salmonicida (strain LFI1238) (Vibrio salmonicida (strain LFI1238)).